Reading from the N-terminus, the 210-residue chain is Small ribosomal subunit protein uS3 (210 aa).

The KH type-2 domain maps to 39–107 (IREKLMEKLK…EILLDIQEVK (69 aa)).

The protein belongs to the universal ribosomal protein uS3 family. As to quaternary structure, part of the 30S ribosomal subunit. Forms a tight complex with proteins S10 and S14.

Functionally, binds the lower part of the 30S subunit head. Binds mRNA in the 70S ribosome, positioning it for translation. In Opitutus terrae (strain DSM 11246 / JCM 15787 / PB90-1), this protein is Small ribosomal subunit protein uS3.